A 248-amino-acid polypeptide reads, in one-letter code: Probable transcriptional regulatory protein PSPTO_3980 (248 aa).

It belongs to the TACO1 family.

The protein localises to the cytoplasm. This chain is Probable transcriptional regulatory protein PSPTO_3980, found in Pseudomonas syringae pv. tomato (strain ATCC BAA-871 / DC3000).